We begin with the raw amino-acid sequence, 109 residues long: Cell division suppressor protein YneA (109 aa).

Residues serine 39–isoleucine 90 form the LysM domain.

The protein belongs to the YneA family.

The protein localises to the cytoplasm. Functionally, inhibits cell division during the SOS response. Affects a later stage of the cell division protein assembly, after the assembly of the Z ring, by probably suppressing recruitment of FtsL and/or DivIC to the division machinery. In Listeria innocua serovar 6a (strain ATCC BAA-680 / CLIP 11262), this protein is Cell division suppressor protein YneA.